We begin with the raw amino-acid sequence, 166 residues long: Orotate phosphoribosyltransferase (166 aa).

Residues Arg83, Lys84, His89, and 109–117 (DDVATTGGS) contribute to the 5-phospho-alpha-D-ribose 1-diphosphate site. Positions 113 and 141 each coordinate orotate.

Belongs to the purine/pyrimidine phosphoribosyltransferase family. PyrE subfamily. As to quaternary structure, homodimer. The cofactor is Mg(2+).

The enzyme catalyses orotidine 5'-phosphate + diphosphate = orotate + 5-phospho-alpha-D-ribose 1-diphosphate. It participates in pyrimidine metabolism; UMP biosynthesis via de novo pathway; UMP from orotate: step 1/2. Its function is as follows. Catalyzes the transfer of a ribosyl phosphate group from 5-phosphoribose 1-diphosphate to orotate, leading to the formation of orotidine monophosphate (OMP). This chain is Orotate phosphoribosyltransferase, found in Picrophilus torridus (strain ATCC 700027 / DSM 9790 / JCM 10055 / NBRC 100828 / KAW 2/3).